The chain runs to 155 residues: Small ribosomal subunit protein uS7cz/uS7cy (155 aa).

The protein belongs to the universal ribosomal protein uS7 family. As to quaternary structure, part of the 30S ribosomal subunit.

It localises to the plastid. The protein localises to the chloroplast. Its function is as follows. One of the primary rRNA binding proteins, it binds directly to 16S rRNA where it nucleates assembly of the head domain of the 30S subunit. The chain is Small ribosomal subunit protein uS7cz/uS7cy (rps7-A) from Citrus sinensis (Sweet orange).